Consider the following 115-residue polypeptide: MLVCVLLYSFRLFGIQGEAQLTESGGDLVHLEGPLRLSCAASWFTFSIYEIHWVCQASGKGLEWVAVIWRGESHQYNADYVRGRLTTSRDNTKYMLYMQMISLRTQNMAAFNCAG.

Residues 1-17 (MLVCVLLYSFRLFGIQG) form the signal peptide. Positions 18–42 (EAQLTESGGDLVHLEGPLRLSCAAS) are framework-1. Positions 19–115 (AQLTESGGDL…QNMAAFNCAG (97 aa)) constitute an Ig-like domain. Residues 43-50 (WFTFSIYE) are complementarity-determining-1. Residues 51–67 (IHWVCQASGKGLEWVAV) are framework-2. Cys55 and Cys113 are disulfide-bonded. The tract at residues 68-75 (IWRGESHQ) is complementarity-determining-2. Positions 76–113 (YNADYVRGRLTTSRDNTKYMLYMQMISLRTQNMAAFNC) are framework-3. The complementarity-determining-3 stretch occupies residues 114–115 (AG).

In terms of assembly, immunoglobulins are composed of two identical heavy chains and two identical light chains; disulfide-linked.

It is found in the secreted. Its subcellular location is the cell membrane. Functionally, probable non-functional open reading frame (ORF) of V region of the variable domain of immunoglobulin heavy chains. Non-functional ORF generally cannot participate in the synthesis of a productive immunoglobulin chain due to altered V-(D)-J or switch recombination and/or splicing site (at mRNA level) and/or conserved amino acid change (protein level). Immunoglobulins, also known as antibodies, are membrane-bound or secreted glycoproteins produced by B lymphocytes. In the recognition phase of humoral immunity, the membrane-bound immunoglobulins serve as receptors which, upon binding of a specific antigen, trigger the clonal expansion and differentiation of B lymphocytes into immunoglobulins-secreting plasma cells. Secreted immunoglobulins mediate the effector phase of humoral immunity, which results in the elimination of bound antigens. The antigen binding site is formed by the variable domain of one heavy chain, together with that of its associated light chain. Thus, each immunoglobulin has two antigen binding sites with remarkable affinity for a particular antigen. The variable domains are assembled by a process called V-(D)-J rearrangement and can then be subjected to somatic hypermutations which, after exposure to antigen and selection, allow affinity maturation for a particular antigen. The chain is Probable non-functional immunoglobulin heavy variable 8-51-1 from Homo sapiens (Human).